A 405-amino-acid polypeptide reads, in one-letter code: Endo-1,4-beta-xylanase 5 (405 aa).

Positions 1 to 22 (MTRLATLITLAGLLAVSPGAYA) are cleaved as a signal peptide. N-linked (GlcNAc...) asparagine glycans are attached at residues asparagine 27 and asparagine 69. Residues 32-352 (STGAEGLNSL…KPAYTSVSSL (321 aa)) form the GH10 domain. The active-site Proton donor is glutamate 166. Asparagine 171 carries an N-linked (GlcNAc...) asparagine glycan. The active-site Nucleophile is the glutamate 273. A disulfide bridge connects residues cysteine 302 and cysteine 308. A lipid anchor (GPI-anchor amidated glycine) is attached at glycine 380. Positions 381–405 (AGRETVSIAGLTLALSSLAFGMFML) are cleaved as a propeptide — removed in mature form.

The protein belongs to the glycosyl hydrolase 10 (cellulase F) family.

The protein resides in the cell membrane. It is found in the secreted. The enzyme catalyses Endohydrolysis of (1-&gt;4)-beta-D-xylosidic linkages in xylans.. The protein operates within glycan degradation; xylan degradation. Its function is as follows. Endo-1,4-beta-xylanase involved in the hydrolysis of xylan, a major structural heterogeneous polysaccharide found in plant biomass representing the second most abundant polysaccharide in the biosphere, after cellulose. This Pyricularia grisea (Crabgrass-specific blast fungus) protein is Endo-1,4-beta-xylanase 5 (XYL5).